The chain runs to 503 residues: Aspartyl/glutamyl-tRNA(Asn/Gln) amidotransferase subunit B (503 aa).

This sequence belongs to the GatB/GatE family. GatB subfamily. As to quaternary structure, heterotrimer of A, B and C subunits.

It carries out the reaction L-glutamyl-tRNA(Gln) + L-glutamine + ATP + H2O = L-glutaminyl-tRNA(Gln) + L-glutamate + ADP + phosphate + H(+). The catalysed reaction is L-aspartyl-tRNA(Asn) + L-glutamine + ATP + H2O = L-asparaginyl-tRNA(Asn) + L-glutamate + ADP + phosphate + 2 H(+). Functionally, allows the formation of correctly charged Asn-tRNA(Asn) or Gln-tRNA(Gln) through the transamidation of misacylated Asp-tRNA(Asn) or Glu-tRNA(Gln) in organisms which lack either or both of asparaginyl-tRNA or glutaminyl-tRNA synthetases. The reaction takes place in the presence of glutamine and ATP through an activated phospho-Asp-tRNA(Asn) or phospho-Glu-tRNA(Gln). This chain is Aspartyl/glutamyl-tRNA(Asn/Gln) amidotransferase subunit B, found in Cereibacter sphaeroides (strain ATCC 17029 / ATH 2.4.9) (Rhodobacter sphaeroides).